The sequence spans 320 residues: tRNA N6-adenosine threonylcarbamoyltransferase (320 aa).

Histidine 114 and histidine 118 together coordinate Fe cation. Substrate is bound by residues 136-140, aspartate 169, glycine 182, aspartate 186, and asparagine 273; that span reads VVSGG. Aspartate 297 provides a ligand contact to Fe cation.

The protein belongs to the KAE1 / TsaD family. Fe(2+) is required as a cofactor.

The protein localises to the cytoplasm. It catalyses the reaction L-threonylcarbamoyladenylate + adenosine(37) in tRNA = N(6)-L-threonylcarbamoyladenosine(37) in tRNA + AMP + H(+). Functionally, required for the formation of a threonylcarbamoyl group on adenosine at position 37 (t(6)A37) in tRNAs that read codons beginning with adenine. Is involved in the transfer of the threonylcarbamoyl moiety of threonylcarbamoyl-AMP (TC-AMP) to the N6 group of A37, together with TsaE and TsaB. TsaD likely plays a direct catalytic role in this reaction. This is tRNA N6-adenosine threonylcarbamoyltransferase from Ureaplasma parvum serovar 3 (strain ATCC 27815 / 27 / NCTC 11736).